A 281-amino-acid polypeptide reads, in one-letter code: MSEQTGLALPQTMDRSCWVCFATDEDDRTAEWVRPCRCRGSTKWVHQTCLQRWVDEKQRGNSTARVACPQCNAEYLIVFPKLGPVVYVLDLADRLISKACPFAAAGIMVGSIYWTAVTYGAVTVMQVVGHKEGLDVMERADPLFLLIGLPTIPVMLILGKMIRWEDYVLRLWRKYSNKLQILNSIFPGIGCPVPRIPAEANPLADHVSATRILCGALVFPTIATIVGKLMFSSVNSNLQRTILGGIAFVAIKGAFKVYFKQQQYLRQAHRKILNYPEQEGA.

The RING-CH-type zinc-finger motif lies at Leu-9 to Val-78. Zn(2+) is bound by residues Cys-17, Cys-20, Cys-36, Cys-38, His-46, Cys-49, Cys-68, and Cys-71. 4 helical membrane passes run Phe-102–Val-122, Pro-142–Ile-162, Ile-212–Ser-232, and Thr-241–Gln-261.

The protein localises to the mitochondrion outer membrane. It localises to the endoplasmic reticulum membrane. It carries out the reaction S-ubiquitinyl-[E2 ubiquitin-conjugating enzyme]-L-cysteine + [acceptor protein]-L-lysine = [E2 ubiquitin-conjugating enzyme]-L-cysteine + N(6)-ubiquitinyl-[acceptor protein]-L-lysine.. Its pathway is protein modification; protein ubiquitination. Functionally, mitochondrial E3 ubiquitin-protein ligase that plays a crucial role in the control of mitochondrial morphology by acting as a positive regulator of mitochondrial fission. May play a role in the prevention of cell senescence acting as a regulator of mitochondrial quality control. The chain is E3 ubiquitin-protein ligase MARCHF5 (MARCHF5) from Gallus gallus (Chicken).